The following is a 302-amino-acid chain: Aquaporin NIP3-1 (302 aa).

Residues 1–31 form a disordered region; it reads MEPGSTPPNGSAPATPGTPAPLFSSGGPRVD. A compositionally biased stretch (low complexity) spans 7–21; that stretch reads PPNGSAPATPGTPAP. The next 2 membrane-spanning stretches (helical) occupy residues 76-96 and 102-122; these read LGAE…APIV and GAIS…TVIL. The NPA 1 signature appears at 133–135; it reads NPS. The next 3 helical transmembrane spans lie at 149–169, 193–213, and 217–237; these read LQVP…AFAL, AFFT…AVAT, and AVGE…ILVA. Residues 246–248 carry the NPA 2 motif; it reads NPV. Residues 264 to 284 traverse the membrane as a helical segment; the sequence is WIYLLAPTLGALAGASVYKAV.

This sequence belongs to the MIP/aquaporin (TC 1.A.8) family. NIP (TC 1.A.8.12) subfamily.

The protein resides in the membrane. Aquaporins facilitate the transport of water and small neutral solutes across cell membranes. The protein is Aquaporin NIP3-1 (NIP3-1) of Zea mays (Maize).